A 376-amino-acid chain; its full sequence is Methionine import ATP-binding protein MetN 2 (376 aa).

The ABC transporter domain occupies 34-273 (VRFINLGKTY…PQHDVSKTLL (240 aa)). 70–77 (GRSGAGKS) contacts ATP.

This sequence belongs to the ABC transporter superfamily. Methionine importer (TC 3.A.1.24) family. In terms of assembly, the complex is composed of two ATP-binding proteins (MetN), two transmembrane proteins (MetI) and a solute-binding protein (MetQ).

It localises to the cell inner membrane. The enzyme catalyses L-methionine(out) + ATP + H2O = L-methionine(in) + ADP + phosphate + H(+). The catalysed reaction is D-methionine(out) + ATP + H2O = D-methionine(in) + ADP + phosphate + H(+). Part of the ABC transporter complex MetNIQ involved in methionine import. Responsible for energy coupling to the transport system. The polypeptide is Methionine import ATP-binding protein MetN 2 (Pseudomonas savastanoi pv. phaseolicola (strain 1448A / Race 6) (Pseudomonas syringae pv. phaseolicola (strain 1448A / Race 6))).